We begin with the raw amino-acid sequence, 93 residues long: Phosphoribosyl-ATP pyrophosphatase (93 aa).

The protein belongs to the PRA-PH family.

The protein localises to the cytoplasm. It carries out the reaction 1-(5-phospho-beta-D-ribosyl)-ATP + H2O = 1-(5-phospho-beta-D-ribosyl)-5'-AMP + diphosphate + H(+). It functions in the pathway amino-acid biosynthesis; L-histidine biosynthesis; L-histidine from 5-phospho-alpha-D-ribose 1-diphosphate: step 2/9. This is Phosphoribosyl-ATP pyrophosphatase from Corynebacterium aurimucosum (strain ATCC 700975 / DSM 44827 / CIP 107346 / CN-1) (Corynebacterium nigricans).